A 340-amino-acid polypeptide reads, in one-letter code: Protein LSM14 homolog car-1 (340 aa).

The 81-residue stretch at 1–81 (MSNQTPYIGS…IKDLIVCDTP (81 aa)) folds into the Sm domain. A compositionally biased stretch (low complexity) spans 101–125 (SRSAPASDGAPAASAGSSRAGTPSR). Residues 101–148 (SRSAPASDGAPAASAGSSRAGTPSRNSPLGQIIQNQRPGRGGYQQNFQ) form a disordered region. The segment covering 126–148 (NSPLGQIIQNQRPGRGGYQQNFQ) has biased composition (polar residues). The DFDF domain occupies 178 to 214 (VNHREKLKFESDFDFEKANEKFQEVLVDNLEKLNIED). The FFD box motif lies at 227-243 (AFYDKKTSFFDNISCES). A TFG box motif is present at residues 251–271 (TGRPDWKKERETNQETFGHNA). A disordered region spans residues 277 to 340 (YRRGFGGRGR…QGNTAAAAEQ (64 aa)). A compositionally biased stretch (gly residues) spans 280–296 (GFGGRGRGGNRGYGGYN). Positions 312-325 (GYRQNNGGYRRGGY) are enriched in low complexity.

Belongs to the LSM14 family.

The protein resides in the nucleus. Transcriptional regulator. Involved in modulating embryonic expression of ATP-dependent chaperone cdc-48.1. May play a role in mRNA gene silencing, and RNA granule (P-body) assembly. This is Protein LSM14 homolog car-1 from Caenorhabditis elegans.